A 157-amino-acid polypeptide reads, in one-letter code: Ribonuclease H (157 aa).

Residues 3-144 (NSKTVHLYTD…CDELARDAAT (142 aa)) form the RNase H type-1 domain. Mg(2+) is bound by residues aspartate 12, glutamate 50, aspartate 72, and aspartate 136.

It belongs to the RNase H family. Monomer. The cofactor is Mg(2+).

It is found in the cytoplasm. It catalyses the reaction Endonucleolytic cleavage to 5'-phosphomonoester.. In terms of biological role, endonuclease that specifically degrades the RNA of RNA-DNA hybrids. The polypeptide is Ribonuclease H (Idiomarina loihiensis (strain ATCC BAA-735 / DSM 15497 / L2-TR)).